The primary structure comprises 91 residues: Small ribosomal subunit protein uS19 (91 aa).

The protein belongs to the universal ribosomal protein uS19 family.

Its function is as follows. Protein S19 forms a complex with S13 that binds strongly to the 16S ribosomal RNA. The polypeptide is Small ribosomal subunit protein uS19 (Lactiplantibacillus plantarum (strain ATCC BAA-793 / NCIMB 8826 / WCFS1) (Lactobacillus plantarum)).